A 638-amino-acid chain; its full sequence is 1-deoxy-D-xylulose-5-phosphate synthase (638 aa).

Residues histidine 72 and 113 to 115 (GHA) contribute to the thiamine diphosphate site. Aspartate 144 lines the Mg(2+) pocket. Residues 145–146 (GA), asparagine 174, tyrosine 289, and glutamate 372 contribute to the thiamine diphosphate site. Mg(2+) is bound at residue asparagine 174.

Belongs to the transketolase family. DXPS subfamily. Homodimer. It depends on Mg(2+) as a cofactor. Thiamine diphosphate serves as cofactor.

It carries out the reaction D-glyceraldehyde 3-phosphate + pyruvate + H(+) = 1-deoxy-D-xylulose 5-phosphate + CO2. It functions in the pathway metabolic intermediate biosynthesis; 1-deoxy-D-xylulose 5-phosphate biosynthesis; 1-deoxy-D-xylulose 5-phosphate from D-glyceraldehyde 3-phosphate and pyruvate: step 1/1. In terms of biological role, catalyzes the acyloin condensation reaction between C atoms 2 and 3 of pyruvate and glyceraldehyde 3-phosphate to yield 1-deoxy-D-xylulose-5-phosphate (DXP). This chain is 1-deoxy-D-xylulose-5-phosphate synthase, found in Gloeobacter violaceus (strain ATCC 29082 / PCC 7421).